Consider the following 431-residue polypeptide: Enolase (431 aa).

Glutamine 166 lines the (2R)-2-phosphoglycerate pocket. The Proton donor role is filled by glutamate 208. Residues aspartate 245, glutamate 288, and aspartate 315 each coordinate Mg(2+). (2R)-2-phosphoglycerate contacts are provided by lysine 340, arginine 369, serine 370, and lysine 391. Lysine 340 (proton acceptor) is an active-site residue.

Belongs to the enolase family. The cofactor is Mg(2+).

It localises to the cytoplasm. It is found in the secreted. The protein resides in the cell surface. It carries out the reaction (2R)-2-phosphoglycerate = phosphoenolpyruvate + H2O. The protein operates within carbohydrate degradation; glycolysis; pyruvate from D-glyceraldehyde 3-phosphate: step 4/5. Its function is as follows. Catalyzes the reversible conversion of 2-phosphoglycerate (2-PG) into phosphoenolpyruvate (PEP). It is essential for the degradation of carbohydrates via glycolysis. The sequence is that of Enolase from Clostridium botulinum (strain Eklund 17B / Type B).